The sequence spans 442 residues: tRNA modification GTPase MnmE (442 aa).

Residues Arg21, Glu79, and Lys118 each contribute to the (6S)-5-formyl-5,6,7,8-tetrahydrofolate site. One can recognise a TrmE-type G domain in the interval 214–367; sequence GFKIAIIGKP…LKEELQNYLN (154 aa). Residue Asn224 participates in K(+) binding. GTP is bound by residues 224 to 229, 243 to 249, and 268 to 271; these read NVGKSS, SDIAGTT, and DTAG. Ser228 contributes to the Mg(2+) binding site. Residues Ser243, Ile245, and Thr248 each coordinate K(+). Residue Thr249 participates in Mg(2+) binding. Lys442 serves as a coordination point for (6S)-5-formyl-5,6,7,8-tetrahydrofolate.

This sequence belongs to the TRAFAC class TrmE-Era-EngA-EngB-Septin-like GTPase superfamily. TrmE GTPase family. As to quaternary structure, homodimer. Heterotetramer of two MnmE and two MnmG subunits. The cofactor is K(+).

It localises to the cytoplasm. Exhibits a very high intrinsic GTPase hydrolysis rate. Involved in the addition of a carboxymethylaminomethyl (cmnm) group at the wobble position (U34) of certain tRNAs, forming tRNA-cmnm(5)s(2)U34. The chain is tRNA modification GTPase MnmE from Campylobacter jejuni subsp. doylei (strain ATCC BAA-1458 / RM4099 / 269.97).